The sequence spans 1071 residues: Ubiquitin carboxyl-terminal hydrolase 7 (1071 aa).

The tract at residues Lys467–Pro532 is disordered. A compositionally biased stretch (low complexity) spans Gln471–Gln480. The segment covering Pro481–Lys495 has biased composition (polar residues). 2 stretches are compositionally biased toward pro residues: residues Pro497–Leu507 and Pro516–Pro532. The 461-residue stretch at Thr609–Val1069 folds into the USP domain. Cys618 (nucleophile) is an active-site residue. The disordered stretch occupies residues Arg913 to Lys942. Over residues Lys920–Gly932 the composition is skewed to polar residues. His1014 serves as the catalytic Proton acceptor.

The protein belongs to the peptidase C19 family.

The protein localises to the cytoplasm. It carries out the reaction Thiol-dependent hydrolysis of ester, thioester, amide, peptide and isopeptide bonds formed by the C-terminal Gly of ubiquitin (a 76-residue protein attached to proteins as an intracellular targeting signal).. Its function is as follows. Involved in the sorting of ubiquitinated cargo proteins at the multivesicular body (MVB). The protein is Ubiquitin carboxyl-terminal hydrolase 7 (UBP7) of Saccharomyces cerevisiae (strain ATCC 204508 / S288c) (Baker's yeast).